The chain runs to 563 residues: Putative ABC transporter ATP-binding protein SCO2324 (563 aa).

An ABC transporter 1 domain is found at 2 to 243; that stretch reads IRFEDVSVTY…SPVYPPVVGL (242 aa). 36–43 contributes to the ATP binding site; sequence GPSGVGKS. The disordered stretch occupies residues 271 to 317; the sequence is AGREIPDHTPPPSAPLPAPPAPRPVTSRWRRRGKRPENPSAPTPYAA. The span at 278–293 shows a compositional bias: pro residues; that stretch reads HTPPPSAPLPAPPAPR. Residues 317 to 545 enclose the ABC transporter 2 domain; the sequence is AEVRSLAVRR…SPSYAPQVAK (229 aa). 349 to 356 serves as a coordination point for ATP; the sequence is GRNGAGKS.

This sequence belongs to the ABC transporter superfamily.

It is found in the cell membrane. Its function is as follows. Probably part of an ABC transporter complex. Responsible for energy coupling to the transport system. The sequence is that of Putative ABC transporter ATP-binding protein SCO2324 from Streptomyces coelicolor (strain ATCC BAA-471 / A3(2) / M145).